A 267-amino-acid chain; its full sequence is Acetyl-coenzyme A carboxylase carboxyl transferase subunit beta 1 (267 aa).

The CoA carboxyltransferase N-terminal domain maps to 9-267 (TWQACPKCGR…NYGIGRSAHG (259 aa)). Zn(2+) is bound by residues Cys13, Cys16, Cys31, and Cys34. The C4-type zinc-finger motif lies at 13 to 34 (CPKCGRHVHQRQWGTYQQCPYC).

This sequence belongs to the AccD/PCCB family. Acetyl-CoA carboxylase is a heterohexamer composed of biotin carboxyl carrier protein (AccB), biotin carboxylase (AccC) and two subunits each of ACCase subunit alpha (AccA) and ACCase subunit beta (AccD). Zn(2+) serves as cofactor.

The protein localises to the cytoplasm. The catalysed reaction is N(6)-carboxybiotinyl-L-lysyl-[protein] + acetyl-CoA = N(6)-biotinyl-L-lysyl-[protein] + malonyl-CoA. It functions in the pathway lipid metabolism; malonyl-CoA biosynthesis; malonyl-CoA from acetyl-CoA: step 1/1. Its function is as follows. Component of the acetyl coenzyme A carboxylase (ACC) complex. Biotin carboxylase (BC) catalyzes the carboxylation of biotin on its carrier protein (BCCP) and then the CO(2) group is transferred by the transcarboxylase to acetyl-CoA to form malonyl-CoA. In Lactiplantibacillus plantarum (strain ATCC BAA-793 / NCIMB 8826 / WCFS1) (Lactobacillus plantarum), this protein is Acetyl-coenzyme A carboxylase carboxyl transferase subunit beta 1.